The primary structure comprises 424 residues: Glutamyl-tRNA reductase (424 aa).

Substrate is bound by residues 50-53 (TCNR), Ser98, 103-105 (EDQ), and Gln109. Cys51 functions as the Nucleophile in the catalytic mechanism. An NADP(+)-binding site is contributed by 178–183 (GSGEMG).

It belongs to the glutamyl-tRNA reductase family. As to quaternary structure, homodimer.

The enzyme catalyses (S)-4-amino-5-oxopentanoate + tRNA(Glu) + NADP(+) = L-glutamyl-tRNA(Glu) + NADPH + H(+). It functions in the pathway porphyrin-containing compound metabolism; protoporphyrin-IX biosynthesis; 5-aminolevulinate from L-glutamyl-tRNA(Glu): step 1/2. Catalyzes the NADPH-dependent reduction of glutamyl-tRNA(Glu) to glutamate 1-semialdehyde (GSA). The polypeptide is Glutamyl-tRNA reductase (Methanoregula boonei (strain DSM 21154 / JCM 14090 / 6A8)).